The following is a 631-amino-acid chain: Interferon-induced GTP-binding protein Mx1 (631 aa).

In terms of domain architecture, Dynamin-type G spans 33–306 (DLALPAIAVI…LTSHICKSLP (274 aa)). Residues 43-50 (GDQSSGKS) form a G1 motif region. 43–50 (GDQSSGKS) provides a ligand contact to GTP. The interval 68–70 (VTR) is G2 motif. The G3 motif stretch occupies residues 144–147 (DLPG). Residues 144-148 (DLPGI) and 213-216 (TKPD) contribute to the GTP site. Positions 213–216 (TKPD) are G4 motif. Residues 245–248 (KCRG) are G5 motif. Positions 307–332 (LLEDQINSSHQSASEELQKYGADIPE) are bundle signaling element (BSE). Residues 332–499 (EDDRTRMSFL…HFQMEQIVYC (168 aa)) form a middle domain region. Positions 333–601 (DDRTRMSFLV…TSKCSWFLEE (269 aa)) are stalk. Residues 520-522 (KTK) are critical for lipid-binding. The region spanning 543–631 (TTEMTQHLKA…ARQKLAKFSD (89 aa)) is the GED domain.

This sequence belongs to the TRAFAC class dynamin-like GTPase superfamily. Dynamin/Fzo/YdjA family. In terms of assembly, homooligomer. Oligomerizes into multimeric filamentous or ring-like structures by virtue of its stalk domain. Oligomerization is critical for GTPase activity, protein stability, and recognition of viral target structures. Interacts with TRPC1, TRPC3, TRPC4, TRPC5, TRPC6 and TRPC7. Interacts with HSPA5. Interacts with TUBB/TUBB5. Interacts with DDX39A and DDX39B. In terms of processing, ISGylated.

The protein localises to the cytoplasm. The protein resides in the nucleus. It localises to the endoplasmic reticulum membrane. It is found in the perinuclear region. Interferon-induced dynamin-like GTPase with antiviral activity against influenza A virus, (IAV), influenza B virus (IBV) and Thogoto virus (THOV). Inhibits FLUAV by interfering with the process of primary transcription, probably by affecting the viral polymerase function. The protein is Interferon-induced GTP-binding protein Mx1 (Mx1) of Mus musculus (Mouse).